We begin with the raw amino-acid sequence, 841 residues long: MSFTPMMKQYLDIKKQYSDCLLFFRLGDFYELFFEDAVIASRELEIVLTGRDAGQEERVPMCGVPYHSAQGYIAKLLSRGYKVAICEQVEDPKKAKGLVKREVTKIYTPGTVTEEFFLQEKTNNYIIALAEKDGLIALAVAEVSTGYLGITSVDEGKIEVLASEIRRLAPTEAVVLKNFKNNFLLKDITGIVNYLEKLPAEEIEIAFKGPEASKEAYKILISYLKRIEPAVLSIFGQPEFYQIDSYLYFDESTRKNLEILRNREDNSSSLLGIIDFTQTAMGARKLKEELTKPLLNLKAIADRLDAVEILVNDYELRENLRENLKNLYDLERLSIKLVCGTINPKDLIKIKQSLPQIWHIKNSINHVKNKSVLFAEIYKNLPEMREVYNLIDKSIVDDPPVSPKDGGIIKNGYNPTVDEYRKAREEGQDWIINYEKKERERTGIKSLKVNYNKVFGYFIEVTKANLHLVPADYQRKQTMVNAERFITEELKHYENLILGASEKLANLEYELFCEIRSEILKYQEDLKRAASAVALLDFLISLAVAAIEYDFTRPVITAEPVLEIKNGRHPVVEKSVGRANFVPNDLYLDTKENSLLLITGPNMAGKSTYMRQAALIVILAQIGSFVPAEYARVGLVDKILTRIGATDDLAKGQSTFMVEMIECNNILRNATSRSLILLDEVGRGTSTYDGISIAEAIIEYIQKKIKARTLFSTHYHELTGLEGEIPGVKNFTVLVQEKGEEVKFLHKVVPGKTDKSYGIYVAKLAGLPREVVERAYEILARFEDKGLKVKDTVPVQLSLFEEKPEPSGVIKELIELDLIRMTPLEALNKLYELRQKALGEK.

600–607 lines the ATP pocket; the sequence is GPNMAGKS.

This sequence belongs to the DNA mismatch repair MutS family.

This protein is involved in the repair of mismatches in DNA. It is possible that it carries out the mismatch recognition step. This protein has a weak ATPase activity. The sequence is that of DNA mismatch repair protein MutS from Carboxydothermus hydrogenoformans (strain ATCC BAA-161 / DSM 6008 / Z-2901).